We begin with the raw amino-acid sequence, 104 residues long: Photosystem II reaction center Psb28 protein (104 aa).

Belongs to the Psb28 family. As to quaternary structure, part of the photosystem II complex.

Its subcellular location is the cellular thylakoid membrane. The polypeptide is Photosystem II reaction center Psb28 protein (Synechococcus sp. (strain JA-2-3B'a(2-13)) (Cyanobacteria bacterium Yellowstone B-Prime)).